The chain runs to 673 residues: Annexin A6 (673 aa).

N-acetylalanine is present on Ala2. Ser13 is subject to Phosphoserine. 8 Annexin repeats span residues Phe20–Arg91, Pro92–Gln163, Asp175–Lys247, Ser251–Gly322, Phe363–Met434, Pro435–Thr506, Glu521–Gln595, and Asn599–Gly670. Residue Tyr30 is modified to Phosphotyrosine. An N6-acetyllysine mark is found at Lys63, Lys68, Lys75, and Lys81. Tyr201 is subject to Phosphotyrosine. Residues Lys306, Lys370, and Lys418 each carry the N6-acetyllysine modification. Ser422 is modified (phosphoserine). Residue Lys483 is modified to N6-acetyllysine. Position 537 is a phosphoserine (Ser537). N6-acetyllysine is present on Lys620.

This sequence belongs to the annexin family. In terms of processing, phosphorylated in response to growth factor stimulation.

The protein resides in the cytoplasm. It localises to the melanosome. In terms of biological role, may associate with CD21. May regulate the release of Ca(2+) from intracellular stores. The polypeptide is Annexin A6 (ANXA6) (Bos taurus (Bovine)).